A 155-amino-acid chain; its full sequence is DNA gyrase inhibitor (155 aa).

This sequence belongs to the DNA gyrase inhibitor family. Interacts with DNA gyrase.

It localises to the cytoplasm. Its function is as follows. Inhibits the supercoiling activity of DNA gyrase. Acts by inhibiting DNA gyrase at an early step, prior to (or at the step of) binding of DNA by the gyrase. It protects cells against toxins that target DNA gyrase, by inhibiting activity of these toxins and reducing the formation of lethal double-strand breaks in the cell. In Erwinia billingiae (strain Eb661), this protein is DNA gyrase inhibitor.